Here is a 315-residue protein sequence, read N- to C-terminus: Prephenate dehydratase (315 aa).

The 187-residue stretch at 3–189 (RIAYLGPEGT…ARTRFLLIGV (187 aa)) folds into the Prephenate dehydratase domain. Positions 203 to 280 (SAVLRIANVP…ADVRYLGSWP (78 aa)) constitute an ACT domain.

Homodimer.

The catalysed reaction is prephenate + H(+) = 3-phenylpyruvate + CO2 + H2O. Its pathway is amino-acid biosynthesis; L-phenylalanine biosynthesis; phenylpyruvate from prephenate: step 1/1. This Mycobacterium ulcerans (strain Agy99) protein is Prephenate dehydratase (pheA).